Reading from the N-terminus, the 700-residue chain is Polyribonucleotide nucleotidyltransferase (700 aa).

Asp485 and Asp491 together coordinate Mg(2+). One can recognise a KH domain in the interval Pro552 to Ile611. In terms of domain architecture, S1 motif spans Gly621–Lys689.

The protein belongs to the polyribonucleotide nucleotidyltransferase family. In terms of assembly, component of the RNA degradosome, which is a multiprotein complex involved in RNA processing and mRNA degradation. Requires Mg(2+) as cofactor.

It is found in the cytoplasm. It carries out the reaction RNA(n+1) + phosphate = RNA(n) + a ribonucleoside 5'-diphosphate. In terms of biological role, involved in mRNA degradation. Catalyzes the phosphorolysis of single-stranded polyribonucleotides processively in the 3'- to 5'-direction. This Shewanella baltica (strain OS155 / ATCC BAA-1091) protein is Polyribonucleotide nucleotidyltransferase.